The following is a 322-amino-acid chain: Sideroflexin-2 (322 aa).

An N-acetylmethionine modification is found at methionine 1. Transmembrane regions (helical) follow at residues 99–119 (GMLI…VIFW), 147–167 (ALSY…MNMW), 174–194 (LVGR…NIPM), 223–243 (VGIA…MILL), and 266–286 (LQVL…CGLF).

The protein belongs to the sideroflexin family. Expressed in brain, heart, kidney, spleen, thymus, liver, stomach and skin.

It is found in the mitochondrion inner membrane. The protein resides in the mitochondrion outer membrane. It carries out the reaction L-serine(in) = L-serine(out). Its function is as follows. Mitochondrial amino-acid transporter that mediates transport of serine into mitochondria. Involved in mitochondrial iron homeostasis by regulating heme biosynthesis. This is Sideroflexin-2 from Mus musculus (Mouse).